We begin with the raw amino-acid sequence, 115 residues long: NAD(P)H-quinone oxidoreductase subunit M (115 aa).

It belongs to the complex I NdhM subunit family. In terms of assembly, NDH-1 can be composed of about 15 different subunits; different subcomplexes with different compositions have been identified which probably have different functions.

The protein localises to the cellular thylakoid membrane. The catalysed reaction is a plastoquinone + NADH + (n+1) H(+)(in) = a plastoquinol + NAD(+) + n H(+)(out). It catalyses the reaction a plastoquinone + NADPH + (n+1) H(+)(in) = a plastoquinol + NADP(+) + n H(+)(out). In terms of biological role, NDH-1 shuttles electrons from an unknown electron donor, via FMN and iron-sulfur (Fe-S) centers, to quinones in the respiratory and/or the photosynthetic chain. The immediate electron acceptor for the enzyme in this species is believed to be plastoquinone. Couples the redox reaction to proton translocation, and thus conserves the redox energy in a proton gradient. Cyanobacterial NDH-1 also plays a role in inorganic carbon-concentration. This Prochlorococcus marinus (strain NATL2A) protein is NAD(P)H-quinone oxidoreductase subunit M.